A 302-amino-acid polypeptide reads, in one-letter code: Nucleotide-binding protein Bcep18194_A6125 (302 aa).

Residue 8–15 (GISGSGKS) coordinates ATP. Residue 57 to 60 (DARS) participates in GTP binding.

Belongs to the RapZ-like family.

Functionally, displays ATPase and GTPase activities. The polypeptide is Nucleotide-binding protein Bcep18194_A6125 (Burkholderia lata (strain ATCC 17760 / DSM 23089 / LMG 22485 / NCIMB 9086 / R18194 / 383)).